The sequence spans 917 residues: Outer kinetochore KNL1 complex subunit SPC105 (917 aa).

The span at 1–17 (MNVDERSRIGGREKDAG) shows a compositional bias: basic and acidic residues. The segment at 1–38 (MNVDERSRIGGREKDAGPGKGILKQNQSSQMTSSFLEN) is disordered. Over residues 24-36 (KQNQSSQMTSSFL) the composition is skewed to polar residues. At Ser-77 the chain carries Phosphoserine. Disordered stretches follow at residues 93 to 172 (QNNE…MEMT), 235 to 282 (TEYE…QPME), and 324 to 343 (HHID…KRRK). The span at 106-126 (STNSPTKISSQEEPLVTSTQI) shows a compositional bias: polar residues. A compositionally biased stretch (basic and acidic residues) spans 127 to 137 (DDARTEEKTAA). The short motif at 146-149 (MELT) is the MELT element. Thr-149 is modified (phosphothreonine; by MPS1). The segment covering 156–170 (PDSNKASQHDPTSME) has biased composition (polar residues). Positions 165–183 (DPTSMEMTEVFPRSIRQKN) are interacts with the BUB1-BUB3 complex. 2 consecutive short sequence motifs (MELT; degenerate) follow at residues 169 to 172 (MEMT) and 232 to 235 (IDLT). A phosphothreonine; by MPS1 mark is found at Thr-172 and Thr-235. Polar residues predominate over residues 245–257 (NSVSRSTGKSSDY). Composition is skewed to basic and acidic residues over residues 258-273 (SVER…KSEN) and 324-335 (HHIDESPSEKHA). At Thr-356 the chain carries Phosphothreonine. Ser-380 carries the post-translational modification Phosphoserine. A disordered region spans residues 397–427 (DVFTIEPGTEDTGMQTATDDEEDGENVDDNG). Residues 414–424 (TDDEEDGENVD) are compositionally biased toward acidic residues. The required for interaction with KRE28 stretch occupies residues 507 to 638 (PILEVEAFRC…IKEEIRSLKN (132 aa)). Residues 591 to 628 (ELILAENLNTLKREYEKLNEEVEKVNSIRGKIRKLNEA) adopt a coiled-coil conformation.

As to quaternary structure, component of the KNL1/SPC105 complex composed of SPC105 and KRE28. Part of the outer kinetochore KMN network that includes the KNL1, MIS12 and NDC80 complexes. Interacts (via phosphorylated MELT motifs) with BUB1 and BUB3 in the BUB1-BUB3 complex; the interaction is direct. Interacts with the MIS12 complex subunits MTW1 (via C-terminus) and NSL1 (via C-terminus). Interacts with the NDC80 complex subunits SPC24 and SPC25. Interacts with CNN1 (via N-terminus).

It is found in the nucleus. The protein resides in the chromosome. The protein localises to the centromere. It localises to the kinetochore. Its function is as follows. Acts as a component of the outer kinetochore KNL1 complex that serves as a docking point for spindle assembly checkpoint components and mediates microtubule-kinetochore interactions. Kinetochores, consisting of a centromere-associated inner segment and a microtubule-contacting outer segment, play a crucial role in chromosome segregation by mediating the physical connection between centromeric DNA and spindle microtubules. The outer kinetochore is made up of the ten-subunit KMN network, comprising the MIS12, NDC80 and KNL1 complexes, and auxiliary microtubule-associated components; together they connect the outer kinetochore with the inner kinetochore, bind microtubules, and mediate interactions with mitotic checkpoint proteins that delay anaphase until chromosomes are bioriented on the spindle. Recruits the BUB1-BUB3 complex to kinetochores when phosphorylated by MPS1, to support spindle assembly checkpoint signaling; the effect is reversed by protein phosphatase 1 (PP1). The KNL1 complex is required for kinetochore binding by the kMAPs (kinetochore-bound microtubule-associated proteins) BIM1, BIK1 and SLK19, and motors CIN8 and KAR3. The chain is Outer kinetochore KNL1 complex subunit SPC105 (SPC105) from Saccharomyces cerevisiae (strain ATCC 204508 / S288c) (Baker's yeast).